The following is a 263-amino-acid chain: Glutamate racemase (263 aa).

Residues aspartate 10 to serine 11 and tyrosine 42 to glycine 43 contribute to the substrate site. Cysteine 73 (proton donor/acceptor) is an active-site residue. Asparagine 74 to serine 75 serves as a coordination point for substrate. Cysteine 183 functions as the Proton donor/acceptor in the catalytic mechanism. Substrate is bound at residue threonine 184–histidine 185.

The protein belongs to the aspartate/glutamate racemases family.

The enzyme catalyses L-glutamate = D-glutamate. It functions in the pathway cell wall biogenesis; peptidoglycan biosynthesis. Provides the (R)-glutamate required for cell wall biosynthesis. This chain is Glutamate racemase, found in Acidothermus cellulolyticus (strain ATCC 43068 / DSM 8971 / 11B).